The chain runs to 104 residues: Probable monothiol glutaredoxin 2 (104 aa).

The 98-residue stretch at 7 to 104 (FEFIENEIKN…NGELEKMLKG (98 aa)) folds into the Glutaredoxin domain. Lys-24 provides a ligand contact to glutathione. Residue Cys-32 participates in [2Fe-2S] cluster binding. Residues Arg-61, Phe-73, and 86–87 (CD) contribute to the glutathione site.

The protein belongs to the glutaredoxin family. Monothiol subfamily.

The sequence is that of Probable monothiol glutaredoxin 2 (grxC2) from Rickettsia felis (strain ATCC VR-1525 / URRWXCal2) (Rickettsia azadi).